The sequence spans 165 residues: Endoribonuclease YbeY (165 aa).

Residues H130, H134, and H140 each coordinate Zn(2+).

The protein belongs to the endoribonuclease YbeY family. Zn(2+) is required as a cofactor.

Its subcellular location is the cytoplasm. In terms of biological role, single strand-specific metallo-endoribonuclease involved in late-stage 70S ribosome quality control and in maturation of the 3' terminus of the 16S rRNA. In Streptococcus gordonii (strain Challis / ATCC 35105 / BCRC 15272 / CH1 / DL1 / V288), this protein is Endoribonuclease YbeY.